A 467-amino-acid polypeptide reads, in one-letter code: Hydroxyacid-oxoacid transhydrogenase, mitochondrial (467 aa).

K445 carries the post-translational modification N6-acetyllysine. Phosphoserine is present on S452.

This sequence belongs to the iron-containing alcohol dehydrogenase family. Hydroxyacid-oxoacid transhydrogenase subfamily. In terms of tissue distribution, only expressed in adult liver.

The protein localises to the mitochondrion. It catalyses the reaction (S)-3-hydroxybutanoate + 2-oxoglutarate = (R)-2-hydroxyglutarate + acetoacetate. The enzyme catalyses 4-hydroxybutanoate + 2-oxoglutarate = (R)-2-hydroxyglutarate + succinate semialdehyde. In terms of biological role, catalyzes the cofactor-independent reversible oxidation of gamma-hydroxybutyrate (GHB) to succinic semialdehyde (SSA) coupled to reduction of 2-ketoglutarate (2-KG) to D-2-hydroxyglutarate (D-2-HG). D,L-3-hydroxyisobutyrate and L-3-hydroxybutyrate (L-3-OHB) are also substrates for HOT with 10-fold lower activities. The polypeptide is Hydroxyacid-oxoacid transhydrogenase, mitochondrial (ADHFE1) (Homo sapiens (Human)).